Consider the following 372-residue polypeptide: MRSKVTGAKRWVVKIGSALLTADGKGLDRGAMAVWVEQMVALREAGVELVLVSSGAVAAGMSQLGWTTRPSAMNELQAAASLGQMRLVQAWESSFGEHGKHTAQILLTHDDLSDRKRYLNARSTLRTLVDLGVVPVINENDTVVTDEIRFGDNDTLAALVANLVEADLLVILTDRDGMFDADPRNNPEAQLIYEARADDPSLDAVAGGTGGALGRGGMQTKLRAARLAARSGAHTIIIGGRIERVLDRLKAGERLGTLLSPERGMLAARKQWLAGHLQTRGTLVLDAGAVQALRQANKSLLPVGVKTVQGSFRRGEMVVCVGPDGIEVARGLANYSALEAQKIIGQPSDAIESILGYSAEPELVHRDNLVLV.

Lys14 serves as a coordination point for ATP. Residues Ser54, Asp141, and Asn153 each contribute to the substrate site. 173 to 174 lines the ATP pocket; that stretch reads TD. Positions 280 to 358 constitute a PUA domain; that stretch reads RGTLVLDAGA…DAIESILGYS (79 aa).

The protein belongs to the glutamate 5-kinase family.

The protein localises to the cytoplasm. It catalyses the reaction L-glutamate + ATP = L-glutamyl 5-phosphate + ADP. It functions in the pathway amino-acid biosynthesis; L-proline biosynthesis; L-glutamate 5-semialdehyde from L-glutamate: step 1/2. Its function is as follows. Catalyzes the transfer of a phosphate group to glutamate to form L-glutamate 5-phosphate. The polypeptide is Glutamate 5-kinase (Pseudomonas putida (strain GB-1)).